The sequence spans 607 residues: Proteasome-associated ATPase (607 aa).

A compositionally biased stretch (basic and acidic residues) spans 1–17; it reads MTESDRHDTPKGDRRIS. The tract at residues 1–65 is disordered; that stretch reads MTESDRHDTP…GRPAADNKEL (65 aa). The stretch at 59–102 forms a coiled coil; the sequence is AADNKELQERVDNLTARNAKLLDTLKDARQQLVALREEVDRLGQ. Residue 294–299 coordinates ATP; sequence GCGKTL. The tract at residues 606-607 is docks into pockets in the proteasome alpha-ring; sequence YL.

Belongs to the AAA ATPase family. In terms of assembly, homohexamer. Assembles into a hexameric ring structure that caps the 20S proteasome core. Strongly interacts with the prokaryotic ubiquitin-like protein Pup through a hydrophobic interface; the interacting region of ARC lies in its N-terminal coiled-coil domain. There is one Pup binding site per ARC hexamer ring. Upon ATP-binding, the C-terminus of ARC interacts with the alpha-rings of the proteasome core, possibly by binding to the intersubunit pockets.

It functions in the pathway protein degradation; proteasomal Pup-dependent pathway. ATPase which is responsible for recognizing, binding, unfolding and translocation of pupylated proteins into the bacterial 20S proteasome core particle. May be essential for opening the gate of the 20S proteasome via an interaction with its C-terminus, thereby allowing substrate entry and access to the site of proteolysis. Thus, the C-termini of the proteasomal ATPase may function like a 'key in a lock' to induce gate opening and therefore regulate proteolysis. The chain is Proteasome-associated ATPase from Gordonia bronchialis (strain ATCC 25592 / DSM 43247 / BCRC 13721 / JCM 3198 / KCTC 3076 / NBRC 16047 / NCTC 10667) (Rhodococcus bronchialis).